Reading from the N-terminus, the 106-residue chain is UPF0473 protein SSU98_0068 (106 aa).

It belongs to the UPF0473 family.

The sequence is that of UPF0473 protein SSU98_0068 from Streptococcus suis (strain 98HAH33).